Consider the following 733-residue polypeptide: MTFPEADILLKSGECAGQTMLDTMEAPGHSRQLLLQLNNQRTKGFLCDVIIVVQNALFRAHKNVLAASSAYLKSLVVHDNLLNLDHDMVSPAVFRLVLDFIYTGRLTDSVEAAAAAAVAPGAEPSLGAVLAAASYLQIPDLVALCKKRLKRHGKYCHLRGGGSGGGGYAPYGRPGRGLRAATPVIQACYSSPAGPPPPPAAEPPSGPDAAVNTHCAELYASGPGPAASLCAPERRCSPLCGLDLSKKSPPGSSVPERPLSERELPPRPDSPPGAGPAVYKEPSLALPPLPPLPFQKLEEAVPTPDPFRGSGGSPGPEPPGRPDGSSLLYRWMKHEPGLGSYGDELVRDRGSPGERLEERGGDPAASPGGPPLGLVPPPRYPGSLDGPGTGADGDDYKSSSEETGSSEDPSPPGGHLEGYPCPHLAYGEPESFGDNLYVCIPCGKGFPSSEQLNAHVEAHVEEEEALYGRAEAAEVAAGAAGLGPPFGGGGDKVTGAPGGLGELLRPYRCASCDKSYKDPATLRQHEKTHWLTRPYPCTICGKKFTQRGTMTRHMRSHLGLKPFACDACGMRFTRQYRLTEHMRIHSGEKPYECQVCGGKFAQQRNLISHMKMHAVGGAAGAAGALAGLGGLPGVPGPDGKGKLDFPEGVFAVARLTAEQLSLKQQDKAAAAELLAQTTHFLHDPKVALESLYPLAKFTAELGLSPDKAAEVLSQGAHLAAGPDSRTIDRFSPT.

In terms of domain architecture, BTB spans C47 to V110. Positions K154–G315 are mediates HDAC-dependent transcriptional repression. R159 carries the omega-N-methylarginine modification. Residues Y189 to A209 form a disordered region. Residues A193–G206 show a composition bias toward pro residues. S237 bears the Phosphoserine mark. The interaction with CTBP1 stretch occupies residues G241–K247. Residues G241 to C421 are disordered. S248 is subject to Phosphoserine. Position 333 is an N6-acetyllysine; alternate (K333). Residue K333 forms a Glycyl lysine isopeptide (Lys-Gly) (interchain with G-Cter in SUMO); alternate linkage. Residues E344–G361 are compositionally biased toward basic and acidic residues. Position 366 is a phosphoserine (S366). Residues G368–Y380 are compositionally biased toward pro residues. 5 C2H2-type zinc fingers span residues Y437–E464, Y507–P534, Y535–P562, F563–P590, and Y591–A618. Phosphoserine is present on S704.

Belongs to the krueppel C2H2-type zinc-finger protein family. Hic subfamily. In terms of assembly, self-associates. Interacts with HIC2. Interacts with CTBP1 and CTBP2. Interacts with TCF7L2 and ARID1A. Interacts with MTA1 and MBD3; indicative for an association with the NuRD complex. Interacts with SIRT1. Post-translationally, acetylated on several residues, including Lys-333. Lys-333 is deacetylated by SIRT1. Sumoylated on Lys-333 by a PIAS family member, which enhances interaction with MTA1, positively regulates transcriptional repression activity and is enhanced by HDAC4. In terms of tissue distribution, ubiquitously expressed with highest levels in heart and lung.

It localises to the nucleus. Transcriptional repressor. Recognizes and binds to the consensus sequence '5-[CG]NG[CG]GGGCA[CA]CC-3'. May act as a tumor suppressor. Involved in development of head, face, limbs and ventral body wall. Involved in down-regulation of SIRT1 and thereby is involved in regulation of p53/TP53-dependent apoptotic DNA-damage responses. The specific target gene promoter association seems to be depend on corepressors, such as CTBP1 or CTBP2 and MTA1. In cooperation with MTA1 (indicative for an association with the NuRD complex) represses transcription from CCND1/cyclin-D1 and CDKN1C/p57Kip2 specifically in quiescent cells. Involved in regulation of the Wnt signaling pathway probably by association with TCF7L2 and preventing TCF7L2 and CTNNB1 association with promoters of TCF-responsive genes. Seems to repress transcription from E2F1 and ATOH1 which involves ARID1A, indicative for the participation of a distinct SWI/SNF-type chromatin-remodeling complex. Probably represses transcription from ACKR3, FGFBP1 and EFNA1. This chain is Hypermethylated in cancer 1 protein (Hic1), found in Mus musculus (Mouse).